Here is a 388-residue protein sequence, read N- to C-terminus: S-adenosylmethionine synthase (388 aa).

His17 contributes to the ATP binding site. Asp19 contributes to the Mg(2+) binding site. Glu45 serves as a coordination point for K(+). Positions 58 and 101 each coordinate L-methionine. The flexible loop stretch occupies residues 101–111 (QSPDIGQGVDT). Residues 160–162 (DGK), 226–227 (RF), Asp235, 241–242 (RK), Ala258, and Lys262 each bind ATP. Asp235 is a binding site for L-methionine. Residue Lys266 participates in L-methionine binding.

Belongs to the AdoMet synthase family. In terms of assembly, homotetramer; dimer of dimers. It depends on Mg(2+) as a cofactor. K(+) serves as cofactor.

It is found in the cytoplasm. The enzyme catalyses L-methionine + ATP + H2O = S-adenosyl-L-methionine + phosphate + diphosphate. It functions in the pathway amino-acid biosynthesis; S-adenosyl-L-methionine biosynthesis; S-adenosyl-L-methionine from L-methionine: step 1/1. In terms of biological role, catalyzes the formation of S-adenosylmethionine (AdoMet) from methionine and ATP. The overall synthetic reaction is composed of two sequential steps, AdoMet formation and the subsequent tripolyphosphate hydrolysis which occurs prior to release of AdoMet from the enzyme. This chain is S-adenosylmethionine synthase, found in Anaeromyxobacter sp. (strain K).